Here is a 257-residue protein sequence, read N- to C-terminus: Spermidine/putrescine transport system permease protein PotC (257 aa).

The Cytoplasmic segment spans residues 1–7 (MSRFFLR). Residues 8-27 (NAFMFVVYAYLYIPIIILVT) traverse the membrane as a helical segment. The Periplasmic segment spans residues 28–65 (NSFNKDRYGLSWKGFSWNWYERLFNNDTLIQAAIHSVT). An ABC transmembrane type-1 domain is found at 60-248 (AIHSVTIAFF…VLSLALVVLS (189 aa)). A helical transmembrane segment spans residues 66–85 (IAFFAATLATIVGGLTAIAL). Residues 86 to 100 (YRYRFRGKQAVSGML) lie on the Cytoplasmic side of the membrane. The chain crosses the membrane as a helical span at residues 101-120 (FIVMMSPDIVMAVSLLALFM). The Periplasmic segment spans residues 121-128 (VVGISLGF). The chain crosses the membrane as a helical span at residues 129–148 (WSLLLAHVTFCLPYVTVTIF). Residues 149–176 (SRLNGFDSRMLEAAKDLGASEVTILRKI) are Cytoplasmic-facing. The chain crosses the membrane as a helical span at residues 177–196 (ILPLALPAVVSGWLLSFTIS). The Periplasmic portion of the chain corresponds to 197–231 (LDDVVVSSFVSGVSYEILPLRIFSLVKTGVTPEVN). Residues 232–251 (ALATIMIVLSLALVVLSQLI) traverse the membrane as a helical segment. Topologically, residues 252 to 257 (TRKNNH) are cytoplasmic.

It belongs to the binding-protein-dependent transport system permease family. CysTW subfamily.

The protein resides in the cell inner membrane. Functionally, required for the activity of the bacterial periplasmic transport system of putrescine and spermidine. This is Spermidine/putrescine transport system permease protein PotC (potC) from Haemophilus influenzae (strain ATCC 51907 / DSM 11121 / KW20 / Rd).